Reading from the N-terminus, the 353-residue chain is Melatonin receptor type 1A (353 aa).

Residues 1 to 26 (MRANGSELNGTVLPRDPPAEGSPRRP) are disordered. Residues 1–32 (MRANGSELNGTVLPRDPPAEGSPRRPPWVTST) are Extracellular-facing. 2 N-linked (GlcNAc...) asparagine glycosylation sites follow: Asn-4 and Asn-9. The helical transmembrane segment at 33 to 53 (LATILIFTIVVDLLGNLLVIL) threads the bilayer. The Cytoplasmic portion of the chain corresponds to 54-66 (SVYRNKKLRNAGN). The helical transmembrane segment at 67 to 87 (IFVVSLAIADLVVAIYPYPLV) threads the bilayer. The Extracellular segment spans residues 88–105 (LTSVFHNGWNLGYLHCQI). Residues Cys-103 and Cys-180 are joined by a disulfide bond. Residues 106-126 (SGFLMGLSVIGSIFNITGIAI) form a helical membrane-spanning segment. The Cytoplasmic segment spans residues 127-145 (NRYCYICHSLKYDKLYSDK). A helical transmembrane segment spans residues 146-166 (NSLCYVGLIWVLTVVAIVPNL). The Extracellular segment spans residues 167–190 (FVGSLQYDPRIYSCTFAQSVSSAY). The helical transmembrane segment at 191-211 (TIAVVFFHFILPIAIVTYCYL) threads the bilayer. Residues 212–243 (RIWILVIQVRRRVKPDNNPRLKPHDFRNFVTM) are Cytoplasmic-facing. The helical transmembrane segment at 244-264 (FVVFVLFAVCWAPLNFIGLAV) threads the bilayer. The Extracellular segment spans residues 265 to 277 (AVDPETIIPRIPE). Residues 278–298 (WLFVSSYYMAYFNSCLNAIIY) traverse the membrane as a helical segment. At 299 to 353 (GLLNQNFRREYKKIVVSFCTAKAFFQDSSNDAADRIRSKPSPLITNNNQVKVDSV) the chain is on the cytoplasmic side.

This sequence belongs to the G-protein coupled receptor 1 family. As to expression, expressed in optic tectum and retina, less in neostriatum, hypothalamus and thalamus.

It localises to the cell membrane. Functionally, high affinity receptor for melatonin. The activity of this receptor is mediated by pertussis toxin sensitive G proteins that inhibits adenylate cyclase activity. This Gallus gallus (Chicken) protein is Melatonin receptor type 1A.